The following is a 401-amino-acid chain: Acetate kinase (401 aa).

Asparagine 7 contacts Mg(2+). Lysine 14 serves as a coordination point for ATP. Substrate is bound at residue arginine 92. Residue aspartate 149 is the Proton donor/acceptor of the active site. ATP is bound by residues 209–213, 283–285, and 331–335; these read HLGNG, DAR, and GLGEN. Mg(2+) is bound at residue glutamate 385.

This sequence belongs to the acetokinase family. As to quaternary structure, homodimer. Requires Mg(2+) as cofactor. Mn(2+) serves as cofactor.

The protein resides in the cytoplasm. It carries out the reaction acetate + ATP = acetyl phosphate + ADP. The protein operates within metabolic intermediate biosynthesis; acetyl-CoA biosynthesis; acetyl-CoA from acetate: step 1/2. In terms of biological role, catalyzes the formation of acetyl phosphate from acetate and ATP. Can also catalyze the reverse reaction. The chain is Acetate kinase from Helicobacter pylori (strain Shi470).